The sequence spans 312 residues: uncharacterized protein (312 aa).

Active-site charge relay system residues include S200, D261, and H292.

Belongs to the AB hydrolase superfamily. AB hydrolase 2 family.

This is an uncharacterized protein from Acanthamoeba polyphaga mimivirus (APMV).